The primary structure comprises 330 residues: Methionyl-tRNA formyltransferase (330 aa).

Position 121 to 124 (121 to 124 (SLLP)) interacts with (6S)-5,6,7,8-tetrahydrofolate.

Belongs to the Fmt family.

It catalyses the reaction L-methionyl-tRNA(fMet) + (6R)-10-formyltetrahydrofolate = N-formyl-L-methionyl-tRNA(fMet) + (6S)-5,6,7,8-tetrahydrofolate + H(+). Attaches a formyl group to the free amino group of methionyl-tRNA(fMet). The formyl group appears to play a dual role in the initiator identity of N-formylmethionyl-tRNA by promoting its recognition by IF2 and preventing the misappropriation of this tRNA by the elongation apparatus. This Burkholderia cenocepacia (strain ATCC BAA-245 / DSM 16553 / LMG 16656 / NCTC 13227 / J2315 / CF5610) (Burkholderia cepacia (strain J2315)) protein is Methionyl-tRNA formyltransferase.